The chain runs to 81 residues: uncharacterized protein (81 aa).

The first 22 residues, 1 to 22 (MNKKLSIIFLIFALIASVLCSA), serve as a signal peptide directing secretion. Residues 29 to 81 (HSSSTTTTTSSSGGTSGTDSSINTGSSYSGSGSGSGSTGGSGSGSGSGTAKWK) are disordered. Low complexity predominate over residues 30–58 (SSSTTTTTSSSGGTSGTDSSINTGSSYSG). Over residues 59–75 (SGSGSGSTGGSGSGSGS) the composition is skewed to gly residues.

It localises to the secreted. This is an uncharacterized protein from Dictyostelium discoideum (Social amoeba).